Reading from the N-terminus, the 261-residue chain is Sulfur carrier protein FdhD (261 aa).

The Cysteine persulfide intermediate role is filled by cysteine 105. 245 to 250 contributes to the Mo-bis(molybdopterin guanine dinucleotide) binding site; sequence FIRGDR.

Belongs to the FdhD family.

It is found in the cytoplasm. Required for formate dehydrogenase (FDH) activity. Acts as a sulfur carrier protein that transfers sulfur from IscS to the molybdenum cofactor prior to its insertion into FDH. This chain is Sulfur carrier protein FdhD, found in Listeria innocua serovar 6a (strain ATCC BAA-680 / CLIP 11262).